A 243-amino-acid polypeptide reads, in one-letter code: MYYQNVSVGQLIKRVSRFTVEIDLNGTVEPVHMNNTGRNKEILIPGSLASVRYVDNPNRKTHYDLLAVQRQGRWINIDSLAPNHVAKECLEAGTLKLPGLALPYAVHPESTWRDSRLDFAGKAADGQSWFVETKGVTLANGTLAAFPDAPTTRAVKHVHTLTMAQAEGYQAFLLFIVQLPDIRQMTIYRDRFPELVTAITTAKQNGVRVLAYDTMTGPDQITLGNEIPFDEHLPFSEINLNSL.

Belongs to the SfsA family.

This Lacticaseibacillus casei (strain BL23) (Lactobacillus casei) protein is Sugar fermentation stimulation protein homolog.